The chain runs to 214 residues: SH3 domain-binding glutamic acid-rich protein (214 aa).

The SH3-binding signature appears at 61–67 (NGIPLPP). Residues 101–214 (PGSKVTKSEE…EEEAGEGEDS (114 aa)) are disordered. A compositionally biased stretch (basic and acidic residues) spans 129-144 (GTEKAEKSGENEAQKE). 2 stretches are compositionally biased toward acidic residues: residues 162 to 192 (EGEDGEEGEEGEEREEGGEGETTGETEEAPE) and 198 to 214 (EAEEEEPEEEAGEGEDS).

It belongs to the SH3BGR family.

The polypeptide is SH3 domain-binding glutamic acid-rich protein (Sh3bgr) (Mus musculus (Mouse)).